The primary structure comprises 191 residues: MQLNELNCVILCGGKSSRMGQDKSKLILKNQNLTQFQVDKFSKIFKNVYVSAKEDKFENHFSLIKDSLEFEVYSPMLALYSILSNFKNEFVFVLSVDSPKVGENELLKMLPFLEQNYKIIIAKTPLHKHPLCGFYHSSLAQTCKNFLEKNEQKIGLLFSEIKTKFVEFEDEDAFLNLNFYEEYEKFKSKLK.

GTP is bound by residues 11-13 (LCG), Lys23, Asp66, and Asp97. A Mg(2+)-binding site is contributed by Asp97.

The protein belongs to the MobA family. As to quaternary structure, monomer. It depends on Mg(2+) as a cofactor.

It is found in the cytoplasm. The enzyme catalyses Mo-molybdopterin + GTP + H(+) = Mo-molybdopterin guanine dinucleotide + diphosphate. Transfers a GMP moiety from GTP to Mo-molybdopterin (Mo-MPT) cofactor (Moco or molybdenum cofactor) to form Mo-molybdopterin guanine dinucleotide (Mo-MGD) cofactor. In Campylobacter jejuni subsp. jejuni serotype O:2 (strain ATCC 700819 / NCTC 11168), this protein is Molybdenum cofactor guanylyltransferase.